The sequence spans 761 residues: Zinc finger protein 287 (761 aa).

The region spanning 49-131 is the SCAN box domain; it reads RQNFRNFPYP…TLVEDLTQIL (83 aa). The tract at residues 134-154 is disordered; the sequence is EAPQNSTLSQDTPEEDPRGKH. Positions 170–238 constitute a KRAB domain; the sequence is MTFKDVAVDI…IKEILEGPSP (69 aa). C2H2-type zinc fingers lie at residues 368-390, 396-418, 424-446, 452-474, 480-502, 508-530, 536-558, 564-586, 592-614, 620-642, 648-670, 676-698, 704-726, and 732-754; these read YKCN…QSTH, YECE…QRMH, YECH…QRIH, YKCD…QRTH, YKCL…QRVH, YICN…QKIH, YKCN…QRIH, YKCN…QTTH, YICN…HRTH, YKCS…QRIH, FKCN…QRIH, YKCN…QRTH, and YACR…QRVH.

This sequence belongs to the krueppel C2H2-type zinc-finger protein family.

Its subcellular location is the nucleus. Its function is as follows. May be involved in transcriptional regulation. The protein is Zinc finger protein 287 of Homo sapiens (Human).